The primary structure comprises 323 residues: Tumor-associated calcium signal transducer 2 (323 aa).

A signal peptide spans 1–26; it reads MARGPGLAPPPLRLPLLLLVLAAVTG. Residues 27–274 lie on the Extracellular side of the membrane; that stretch reads HTAAQDNCTC…PPKFSMKRLT (248 aa). N33 is a glycosylation site (N-linked (GlcNAc...) asparagine). Residues 70–145 form the Thyroglobulin type-1 domain; the sequence is TSKCLLLKAR…TDKGDLSLRC (76 aa). Disulfide bonds link C73/C108, C119/C125, and C127/C145. A glycan (N-linked (GlcNAc...) asparagine) is linked at N120. 2 N-linked (GlcNAc...) asparagine glycosylation sites follow: N168 and N208. A helical membrane pass occupies residues 275–297; sequence AGLIAVIVVVVVALVAGMAVLVI. At 298–323 the chain is on the cytoplasmic side; the sequence is TNRRKSGKYKKVEIKELGELRKEPSL.

The protein belongs to the EPCAM family. Post-translationally, the N-terminus is blocked. In terms of tissue distribution, placenta, pancreatic carcinoma cell lines.

The protein localises to the membrane. Functionally, may function as a growth factor receptor. The protein is Tumor-associated calcium signal transducer 2 (TACSTD2) of Homo sapiens (Human).